The primary structure comprises 415 residues: Putative transcription factor BOFH (415 aa).

Positions 159–221 are disordered; it reads SQEPVQHQDQ…NEGEDDDGMD (63 aa). The segment covering 174–183 has biased composition (gly residues); that stretch reads INGGGRGGYW. Residues 193–202 show a composition bias toward basic residues; it reads QQQRRRKKRL. The segment covering 206–220 has biased composition (acidic residues); that stretch reads ETDDDGNEGEDDDGM. 3 DNA-binding regions span residues 234–238, 303–310, and 374–377; these read REHPF, NKPKMRHY, and YVPT.

It belongs to the FLO/LFY family. As to expression, acts in the floral primordia.

The protein resides in the nucleus. Controls floral meristem identity. Is required very early in flower development and may act here as a transcription factor. This Brassica oleracea var. botrytis (Cauliflower) protein is Putative transcription factor BOFH.